A 262-amino-acid polypeptide reads, in one-letter code: uncharacterized protein (262 aa).

The N-terminal stretch at Met1–Thr22 is a signal peptide.

This sequence belongs to the IIV-6 117L family.

This is an uncharacterized protein from Aedes vexans (Inland floodwater mosquito).